A 171-amino-acid polypeptide reads, in one-letter code: Shikimate kinase (171 aa).

Residue 14–19 coordinates ATP; that stretch reads GAGKST. S18 is a binding site for Mg(2+). Positions 36, 60, and 82 each coordinate substrate. An ATP-binding site is contributed by R120. R139 lines the substrate pocket. Q156 serves as a coordination point for ATP.

Belongs to the shikimate kinase family. In terms of assembly, monomer. The cofactor is Mg(2+).

It localises to the cytoplasm. It carries out the reaction shikimate + ATP = 3-phosphoshikimate + ADP + H(+). It participates in metabolic intermediate biosynthesis; chorismate biosynthesis; chorismate from D-erythrose 4-phosphate and phosphoenolpyruvate: step 5/7. Catalyzes the specific phosphorylation of the 3-hydroxyl group of shikimic acid using ATP as a cosubstrate. This Shewanella baltica (strain OS195) protein is Shikimate kinase.